Here is a 339-residue protein sequence, read N- to C-terminus: D-glycero-alpha-D-manno-heptose 7-phosphate kinase (339 aa).

Residue 17 to 20 coordinates substrate; the sequence is GGTD. ATP-binding positions include Ser-57 and 110–116; that span reads GSGLGGS. Mg(2+) is bound by residues Ser-116 and Glu-148. The active-site Proton acceptor is Asp-160.

The protein belongs to the GHMP kinase family.

It carries out the reaction D-glycero-alpha-D-manno-heptose 7-phosphate + ATP = D-glycero-alpha-D-manno-heptose 1,7-bisphosphate + ADP + H(+). The protein operates within nucleotide-sugar biosynthesis; GDP-D-glycero-alpha-D-manno-heptose biosynthesis; GDP-D-glycero-alpha-D-manno-heptose from D-glycero-alpha-D-manno-heptose 7-phosphate: step 1/3. It functions in the pathway capsule biogenesis; capsule polysaccharide biosynthesis. Its function is as follows. Catalyzes the phosphorylation of D-glycero-alpha-D-manno-heptose 7-phosphate at the C-1 position to form D-glycero-alpha-D-manno-heptose 1,7-bisphosphate. The protein is D-glycero-alpha-D-manno-heptose 7-phosphate kinase of Campylobacter jejuni subsp. jejuni serotype O:2 (strain ATCC 700819 / NCTC 11168).